A 444-amino-acid chain; its full sequence is ATP-dependent protease ATPase subunit HslU (444 aa).

ATP is bound by residues Ile-20 and 62 to 67 (GVGKTE). Positions 130-158 (EDRILDALVPPPRGASGEPERGEDNSARQ) are disordered. Positions 257, 322, and 394 each coordinate ATP.

The protein belongs to the ClpX chaperone family. HslU subfamily. In terms of assembly, a double ring-shaped homohexamer of HslV is capped on each side by a ring-shaped HslU homohexamer. The assembly of the HslU/HslV complex is dependent on binding of ATP.

It localises to the cytoplasm. ATPase subunit of a proteasome-like degradation complex; this subunit has chaperone activity. The binding of ATP and its subsequent hydrolysis by HslU are essential for unfolding of protein substrates subsequently hydrolyzed by HslV. HslU recognizes the N-terminal part of its protein substrates and unfolds these before they are guided to HslV for hydrolysis. The sequence is that of ATP-dependent protease ATPase subunit HslU from Bordetella bronchiseptica (strain ATCC BAA-588 / NCTC 13252 / RB50) (Alcaligenes bronchisepticus).